Reading from the N-terminus, the 159-residue chain is Putative 4-hydroxy-4-methyl-2-oxoglutarate aldolase (159 aa).

Substrate is bound by residues 75–78 and R97; that span reads GDQL. D98 contributes to the a divalent metal cation binding site.

This sequence belongs to the class II aldolase/RraA-like family. In terms of assembly, homotrimer. Requires a divalent metal cation as cofactor.

It catalyses the reaction 4-hydroxy-4-methyl-2-oxoglutarate = 2 pyruvate. The enzyme catalyses oxaloacetate + H(+) = pyruvate + CO2. Its function is as follows. Catalyzes the aldol cleavage of 4-hydroxy-4-methyl-2-oxoglutarate (HMG) into 2 molecules of pyruvate. Also contains a secondary oxaloacetate (OAA) decarboxylase activity due to the common pyruvate enolate transition state formed following C-C bond cleavage in the retro-aldol and decarboxylation reactions. The protein is Putative 4-hydroxy-4-methyl-2-oxoglutarate aldolase of Aromatoleum aromaticum (strain DSM 19018 / LMG 30748 / EbN1) (Azoarcus sp. (strain EbN1)).